Reading from the N-terminus, the 560-residue chain is Nuclear hormone receptor family member nhr-8 (560 aa).

The tract at residues 1–21 (MPSSSPSMDESRRSAVPPKEP) is disordered. Positions 23 to 98 (GRICTVCSDR…VGMNSEWLND (76 aa)) form a DNA-binding region, nuclear receptor. 2 NR C4-type zinc fingers span residues 26–46 (CTVC…CESC) and 62–86 (CPFS…LNKC). The NR LBD domain maps to 336–560 (DEITLLEELH…PLIRELCSFE (225 aa)).

It belongs to the nuclear hormone receptor family.

It localises to the nucleus. Orphan nuclear receptor. The sequence is that of Nuclear hormone receptor family member nhr-8 (nhr-8) from Caenorhabditis elegans.